We begin with the raw amino-acid sequence, 141 residues long: Cystatin (141 aa).

An N-terminal signal peptide occupies residues Met-1–Met-26. Residues Gly-29–Trp-129 enclose the Cystatin domain. The Secondary area of contact motif lies at Gln-73 to Gly-77. 2 cysteine pairs are disulfide-bonded: Cys-91–Cys-107 and Cys-120–Cys-140.

Belongs to the cystatin family. Expressed at a low level by the venom gland (at protein level).

It localises to the secreted. Its function is as follows. Inhibits various C1 cysteine proteases including cathepsin L, papain and cathepsin B. This protein has no toxic activity and its function in the venom is unknown. It may play a role as a housekeeping or regulatory protein. The sequence is that of Cystatin from Hoplocephalus stephensii (Stephens's banded snake).